Here is a 102-residue protein sequence, read N- to C-terminus: Flagellar hook-basal body complex protein FliE 1 (102 aa).

The protein belongs to the FliE family.

Its subcellular location is the bacterial flagellum basal body. In Bradyrhizobium diazoefficiens (strain JCM 10833 / BCRC 13528 / IAM 13628 / NBRC 14792 / USDA 110), this protein is Flagellar hook-basal body complex protein FliE 1 (fliE1).